Reading from the N-terminus, the 292-residue chain is NAD kinase (292 aa).

Asp-73 acts as the Proton acceptor in catalysis. Residues 73-74 (DG), 147-148 (NE), His-158, Arg-175, Asp-177, 188-193 (TAYSLS), and Gln-247 contribute to the NAD(+) site.

The protein belongs to the NAD kinase family. The cofactor is a divalent metal cation.

The protein resides in the cytoplasm. It carries out the reaction NAD(+) + ATP = ADP + NADP(+) + H(+). Its function is as follows. Involved in the regulation of the intracellular balance of NAD and NADP, and is a key enzyme in the biosynthesis of NADP. Catalyzes specifically the phosphorylation on 2'-hydroxyl of the adenosine moiety of NAD to yield NADP. In Escherichia coli (strain UTI89 / UPEC), this protein is NAD kinase.